We begin with the raw amino-acid sequence, 574 residues long: Arginine--tRNA ligase (574 aa).

The 'HIGH' region signature appears at 121 to 131 (PNIAKEMHIGH).

It belongs to the class-I aminoacyl-tRNA synthetase family. In terms of assembly, monomer.

The protein localises to the cytoplasm. It carries out the reaction tRNA(Arg) + L-arginine + ATP = L-arginyl-tRNA(Arg) + AMP + diphosphate. The chain is Arginine--tRNA ligase from Buchnera aphidicola subsp. Acyrthosiphon pisum (strain Tuc7).